Consider the following 547-residue polypeptide: Chaperonin GroEL (547 aa).

Residues 30-33 (TLGP), lysine 51, 87-91 (DGTTT), glycine 415, 479-481 (NAA), and aspartate 495 each bind ATP.

This sequence belongs to the chaperonin (HSP60) family. In terms of assembly, forms a cylinder of 14 subunits composed of two heptameric rings stacked back-to-back. Interacts with the co-chaperonin GroES.

The protein localises to the cytoplasm. The catalysed reaction is ATP + H2O + a folded polypeptide = ADP + phosphate + an unfolded polypeptide.. Functionally, together with its co-chaperonin GroES, plays an essential role in assisting protein folding. The GroEL-GroES system forms a nano-cage that allows encapsulation of the non-native substrate proteins and provides a physical environment optimized to promote and accelerate protein folding. The polypeptide is Chaperonin GroEL (Cupriavidus metallidurans (strain ATCC 43123 / DSM 2839 / NBRC 102507 / CH34) (Ralstonia metallidurans)).